Reading from the N-terminus, the 132-residue chain is Small ribosomal subunit protein uS8 (132 aa).

In terms of assembly, part of the 30S ribosomal subunit. Contacts proteins S5 and S12. In terms of processing, a modified and unmodified form exist; the nature of the modification(s) is unknown.

One of the primary rRNA binding proteins, it binds directly to 16S rRNA central domain where it helps coordinate assembly of the platform of the 30S subunit. The protein is Small ribosomal subunit protein uS8 of Rhodopseudomonas palustris (strain ATCC BAA-98 / CGA009).